The sequence spans 496 residues: O-acetyltransferase cpsE (496 aa).

Residues 203-217 (IGTQGQLPDGVQSSD) show a composition bias toward polar residues. Residues 203–228 (IGTQGQLPDGVQSSDDPTDGAGDIFE) form a disordered region.

This sequence belongs to the fumigaclavine B O-acetyltransferase family.

The enzyme catalyses campesine A + acetyl-CoA = campesine C + CoA. The protein operates within alkaloid biosynthesis. Functionally, O-acetyltransferase; part of the gene cluster that mediates the biosynthesis of campesine G, a dimeric indole piperazine alkaloid that shows good insecticidal activity Galleria mellonella. Within the pathway, cpsE acetylates N13 of campesine A to produce campesine C. CpsE produces an inseparable mixture of two acyl-atropisomers due to the spontaneous rotation of an acyl group at N13 of piperazine ring. The non-canonical non-ribosomal peptide synthetase cpsA catalyzes the first steps of the pathway by producing L-tryptophanal and L-valinal from their respective amino-acids. These products condensate spontaneously to form trypyl-valyl pyrazine also known as didehydrocampesine A. The NmrA-like family domain-containing oxidoreductase cpsB is the next enzyme in cps pathway and reduces the unstable didehydrocampesine A to campesine A. The methyltransferase cpsF and the acetyltransferase cpsE both recognize N13 of piperazine ring to carry out methylation and acetylation of campesine A to produce campesine C and B, respectively. The cytochrome P450 monooxygenase cpsD then acts as a dimerase that catalyzes oxidative heterocoupling between campesine B and C to produce heterodimers with unexpected 6/5/6/6/6/6/5/6 eight-ring scaffold called campesine D. Finally,the cytochrome P450 monooxygenase cpsC is a regioselective dehydrogenase that catalyzes dehydrogenation reaction towards C2-N1 to produce campesine G. This is O-acetyltransferase cpsE from Aspergillus campestris (strain IBT 28561).